A 423-amino-acid chain; its full sequence is Carboxypeptidase B2 (423 aa).

An N-terminal signal peptide occupies residues 1–22 (MKLCSLAVLVPIVLFCEQHVFA). A propeptide spans 23–114 (FQSGQVLAAL…QISNDTVSPR (92 aa)) (activation peptide). 3 N-linked (GlcNAc...) asparagine glycosylation sites follow: asparagine 44, asparagine 73, and asparagine 85. Asparagine 108 carries N-linked (GlcNAc...) (complex) asparagine glycosylation. The Peptidase M14 domain maps to 122–419 (QYHSLNEIYS…AAVSKIAWHV (298 aa)). Cysteines 178 and 191 form a disulfide. Positions 181 and 184 each coordinate Zn(2+). Residues 181 to 184 (HARE) and arginine 239 contribute to the substrate site. Asparagine 241 carries an N-linked (GlcNAc...) asparagine; partial glycan. Cystine bridges form between cysteine 250/cysteine 274 and cysteine 265/cysteine 279. Residue 256-257 (NR) coordinates substrate. Histidine 310 serves as a coordination point for Zn(2+). Residues 311-312 (SY) and tyrosine 363 contribute to the substrate site. The Proton donor/acceptor role is filled by glutamate 385.

The protein belongs to the peptidase M14 family. The cofactor is Zn(2+). Post-translationally, N-glycosylated. N-glycan at Asn-108: Hex5HexNAc4. Plasma; synthesized in the liver.

It localises to the secreted. The catalysed reaction is Release of C-terminal Arg and Lys from a polypeptide.. Its activity is regulated as follows. TAFI/CPB2 is unique among carboxypeptidases in that it spontaneously inactivates with a short half-life, a property that is crucial for its role in controlling blood clot lysis. The zymogen is stabilized by interactions with the activation peptide. Release of the activation peptide increases a dynamic flap mobility and in time this leads to conformational changes that disrupt the catalytic site and expose a cryptic thrombin-cleavage site present at Arg-324. Its function is as follows. Cleaves C-terminal arginine or lysine residues from biologically active peptides such as kinins or anaphylatoxins in the circulation thereby regulating their activities. Down-regulates fibrinolysis by removing C-terminal lysine residues from fibrin that has already been partially degraded by plasmin. This chain is Carboxypeptidase B2 (CPB2), found in Homo sapiens (Human).